Reading from the N-terminus, the 140-residue chain is MNRTEAREWVVKMLYQYDVSRLPISKILENFYKEKDPGEQKEYIENTVIGAIEHLEEIDKEIERYSQNWALNRMPKIDLAILRCSIYEMQYGNIPVNISINEAVEIAKKYSTEDSPAFINGLLGAFVRDEGLEEGESNDN.

The protein belongs to the NusB family.

Involved in transcription antitermination. Required for transcription of ribosomal RNA (rRNA) genes. Binds specifically to the boxA antiterminator sequence of the ribosomal RNA (rrn) operons. The sequence is that of Transcription antitermination protein NusB from Thermoanaerobacter pseudethanolicus (strain ATCC 33223 / 39E) (Clostridium thermohydrosulfuricum).